The primary structure comprises 349 residues: B3 domain-containing protein At5g24050 (349 aa).

A DNA-binding region (TF-B3) is located at residues 240 to 341 (FNNLLRNDFL…ILCFAMEQSS (102 aa)).

Its subcellular location is the nucleus. The protein is B3 domain-containing protein At5g24050 of Arabidopsis thaliana (Mouse-ear cress).